A 252-amino-acid chain; its full sequence is 5-oxoprolinase subunit A (252 aa).

The protein belongs to the LamB/PxpA family. In terms of assembly, forms a complex composed of PxpA, PxpB and PxpC.

It catalyses the reaction 5-oxo-L-proline + ATP + 2 H2O = L-glutamate + ADP + phosphate + H(+). In terms of biological role, catalyzes the cleavage of 5-oxoproline to form L-glutamate coupled to the hydrolysis of ATP to ADP and inorganic phosphate. This Mycolicibacterium paratuberculosis (strain ATCC BAA-968 / K-10) (Mycobacterium paratuberculosis) protein is 5-oxoprolinase subunit A.